Consider the following 115-residue polypeptide: Probable non-functional T cell receptor beta variable 7-1 (115 aa).

The signal sequence occupies residues 1–21; it reads MGTRLLCWAAICLLGADHTGA. Positions 22–115 constitute an Ig-like domain; sequence GVSQSLRHKV…LAVYLCASSS (94 aa).

In terms of assembly, most probably, the alpha-beta TR is not assembled due to incorrect folding of the beta chain. Alpha-beta TR is a heterodimer composed of an alpha and beta chain; disulfide-linked. The alpha-beta TR is associated with the transmembrane signaling CD3 coreceptor proteins to form the TR-CD3 (TcR or TCR). The assembly of alpha-beta TR heterodimers with CD3 occurs in the endoplasmic reticulum where a single alpha-beta TR heterodimer associates with one CD3D-CD3E heterodimer, one CD3G-CD3E heterodimer and one CD247 homodimer forming a stable octameric structure. CD3D-CD3E and CD3G-CD3E heterodimers preferentially associate with TR alpha and TR beta chains, respectively. The association of the CD247 homodimer is the last step of TcR assembly in the endoplasmic reticulum and is required for transport to the cell surface.

Its subcellular location is the cell membrane. Probable non-functional open reading frame (ORF) of V region of the variable domain of T cell receptor (TR) beta chain. Non-functional ORF generally cannot participate in the synthesis of a productive T cell receptor (TR) chain due to altered V-(D)-J or switch recombination and/or splicing site (at mRNA level) and/or conserved amino acid change (protein level). Alpha-beta T cell receptors are antigen specific receptors which are essential to the immune response and are present on the cell surface of T lymphocytes. Recognize peptide-major histocompatibility (MH) (pMH) complexes that are displayed by antigen presenting cells (APC), a prerequisite for efficient T cell adaptive immunity against pathogens. Binding of alpha-beta TR to pMH complex initiates TR-CD3 clustering on the cell surface and intracellular activation of LCK that phosphorylates the ITAM motifs of CD3G, CD3D, CD3E and CD247 enabling the recruitment of ZAP70. In turn ZAP70 phosphorylates LAT, which recruits numerous signaling molecules to form the LAT signalosome. The LAT signalosome propagates signal branching to three major signaling pathways, the calcium, the mitogen-activated protein kinase (MAPK) kinase and the nuclear factor NF-kappa-B (NF-kB) pathways, leading to the mobilization of transcription factors that are critical for gene expression and essential for T cell growth and differentiation. The T cell repertoire is generated in the thymus, by V-(D)-J rearrangement. This repertoire is then shaped by intrathymic selection events to generate a peripheral T cell pool of self-MH restricted, non-autoaggressive T cells. Post-thymic interaction of alpha-beta TR with the pMH complexes shapes TR structural and functional avidity. The chain is Probable non-functional T cell receptor beta variable 7-1 from Homo sapiens (Human).